The chain runs to 785 residues: Proprotein convertase subtilisin/kexin type 7 (785 aa).

Residues 1 to 37 (MPKGRQKVPHLDAPLGLPTCLWLELAGLFLLVPWVMG) form the signal peptide. Residues 38-141 (LAGTGGPDGQ…EQRLLRRAKR (104 aa)) constitute a propeptide that is removed on maturation. Residues 142–667 (SVHFNDPKYP…YTITPNTLKT (526 aa)) lie on the Extracellular side of the membrane. The region spanning 153–473 (QWHLNNRRSP…FGLLNAWRLV (321 aa)) is the Peptidase S8 domain. N-linked (GlcNAc...) asparagine glycans are attached at residues N167 and N175. D187 functions as the Charge relay system in the catalytic mechanism. Residues 197-219 (IAPNYSPEGSYDLNSNDPDPMPH) are disordered. The Charge relay system role is filled by H228. N-linked (GlcNAc...) asparagine glycosylation is present at N241. The active-site Charge relay system is S406. Residues 481-618 (SVPYLASYVS…QLTLYGSVWS (138 aa)) enclose the P/Homo B domain. An N-linked (GlcNAc...) asparagine glycan is attached at N511. A helical membrane pass occupies residues 668–688 (LVLVGCFTVFWTVYYMLEVYL). Topologically, residues 689–785 (SQRNVASNQV…VPHGKEEQIC (97 aa)) are cytoplasmic. The interval 700-751 (RSGPCHWPHRSRKAKEEGTELESVPLCSSKDPDEVETESRGPPTTSDLLAPD) is disordered.

It belongs to the peptidase S8 family. It depends on Ca(2+) as a cofactor. Cysteine residues in the cytoplasmic tail are probably palmitoylated. In terms of processing, N-glycosylated. Expressed in spleen, thymus, prostate, testis, ovary, small intestine, colon and peripheral blood leukocyte.

The protein localises to the golgi apparatus. It is found in the trans-Golgi network membrane. Its activity is regulated as follows. Inhibited by zinc and copper. Its function is as follows. Serine endoprotease that processes various proproteins by cleavage at paired basic amino acids, recognizing the RXXX[KR]R consensus motif. Likely functions in the constitutive secretory pathway. The protein is Proprotein convertase subtilisin/kexin type 7 (PCSK7) of Homo sapiens (Human).